Consider the following 296-residue polypeptide: Probable endonuclease 4 (296 aa).

Zn(2+) contacts are provided by histidine 68, histidine 109, glutamate 144, aspartate 178, histidine 181, histidine 213, aspartate 226, histidine 228, and glutamate 258.

The protein belongs to the AP endonuclease 2 family. The cofactor is Zn(2+).

The catalysed reaction is Endonucleolytic cleavage to 5'-phosphooligonucleotide end-products.. Endonuclease IV plays a role in DNA repair. It cleaves phosphodiester bonds at apurinic or apyrimidinic (AP) sites, generating a 3'-hydroxyl group and a 5'-terminal sugar phosphate. This Staphylococcus aureus (strain NCTC 8325 / PS 47) protein is Probable endonuclease 4.